Here is a 175-residue protein sequence, read N- to C-terminus: GTP-dependent dephospho-CoA kinase (175 aa).

5 residues coordinate GTP: D48, V49, V50, D66, and E124.

This sequence belongs to the GTP-dependent DPCK family.

It carries out the reaction 3'-dephospho-CoA + GTP = GDP + CoA + H(+). The protein operates within cofactor biosynthesis; coenzyme A biosynthesis. Functionally, catalyzes the GTP-dependent phosphorylation of the 3'-hydroxyl group of dephosphocoenzyme A to form coenzyme A (CoA). This Thermofilum pendens (strain DSM 2475 / Hrk 5) protein is GTP-dependent dephospho-CoA kinase.